The following is a 712-amino-acid chain: Polyribonucleotide nucleotidyltransferase (712 aa).

Asp487 and Asp493 together coordinate Mg(2+). The KH domain occupies 554–613; it reads PKIITMTINPDKIRDVIGPSGKQINKIIEETGVKIDIEQDGTVFISSINQEMNDKAKKII. An S1 motif domain is found at 623 to 691; sequence GEIYEGKVKR…KQGRVNLSRK (69 aa).

This sequence belongs to the polyribonucleotide nucleotidyltransferase family. Mg(2+) serves as cofactor.

Its subcellular location is the cytoplasm. The enzyme catalyses RNA(n+1) + phosphate = RNA(n) + a ribonucleoside 5'-diphosphate. Functionally, involved in mRNA degradation. Catalyzes the phosphorolysis of single-stranded polyribonucleotides processively in the 3'- to 5'-direction. This is Polyribonucleotide nucleotidyltransferase from Bacillus cereus (strain ATCC 10987 / NRS 248).